We begin with the raw amino-acid sequence, 326 residues long: Phosphate acyltransferase (326 aa).

Belongs to the PlsX family. In terms of assembly, homodimer. Probably interacts with PlsY.

It localises to the cytoplasm. It catalyses the reaction a fatty acyl-[ACP] + phosphate = an acyl phosphate + holo-[ACP]. It functions in the pathway lipid metabolism; phospholipid metabolism. Its function is as follows. Catalyzes the reversible formation of acyl-phosphate (acyl-PO(4)) from acyl-[acyl-carrier-protein] (acyl-ACP). This enzyme utilizes acyl-ACP as fatty acyl donor, but not acyl-CoA. In Macrococcus caseolyticus (strain JCSC5402) (Macrococcoides caseolyticum), this protein is Phosphate acyltransferase.